Consider the following 104-residue polypeptide: Replication restart protein PriB (104 aa).

The 100-residue stretch at 2–101 folds into the SSB domain; it reads TNRLVLSGTV…LHAEQIELID (100 aa). An intrachain disulfide couples C48 to C80. An L45 loop motif is present at residues 82–89; sequence KAKNGLSK.

This sequence belongs to the PriB family. As to quaternary structure, homodimer. Primosome assembly occurs via a 'hand-off' mechanism. PriA binds to replication forks, subsequently PriB then DnaT bind; DnaT then displaces ssDNA to generate the helicase loading substrate, which allows DnaC to load helicase DnaB onto the fork. ssDNA is displaced from the PriB-ssDNA complex by DnaT. In a PriA-PriB-replication fork structure, movement of the PriA CRR domain exposes a surface to which PriB binds and contacts ssDNA emerging from the PriA pore. Binds PriA; binding is improved in the presence of ssDNA. Weakly binds DnaT; binding is improved in the presence of ssDNA; as DnaT levels increase PriB dissociates from ssDNA. Component of the replication restart primosome, which is composed of PriA, PriB, PriC, DnaB and DnaT; DnaG primase associates transiently with this complex. Component of the preprimosomal complex composed of one monomer of PriC and DnaT, two monomers of PriA, two dimers of PriB and one hexamer of DnaB. An intersubunit disulfide bond is seen in some crystals.

Its function is as follows. Involved in the restart of stalled replication forks, which reloads the replicative helicase (DnaB) on sites other than the origin of replication; the PriA-PriB pathway is the major replication restart pathway. There are several restart pathways, the PriA-PriB pathway is subdivided into 2 distinct pathways. priB and priC have redundant roles in the cell. During primosome assembly it facilitates complex formation between PriA and DnaT on DNA; stabilizes PriA on DNA, presumably by preventing or inhibiting PriA DNA translocation activity. Forms a branched DNA-PriA-PriB complex when the lagging strand is single-stranded (ss)DNA. Binds ssDNA in the presence and absence of ssDNA DNA-binding protein (SSB), does not bind branched structures. DNA binding, forming spiral filaments on ssDNA, is cooperative. Stimulates the helicase activity of PriA. The homodimer binds 12 nucleotides of ssDNA. Binds homo-pyrimidine tracts better than homo-purine tracts. In terms of biological role, genetic interactions among priB, dam, lexA, nagC, polA, rdgB, rdgB, rep and uup link the PriA-PriB replication restart pathway to DNA double-strand break repair. This chain is Replication restart protein PriB, found in Escherichia coli (strain K12).